A 490-amino-acid polypeptide reads, in one-letter code: MVPVVALVGRPNVGKSTLFNRLTRTRDALVADFPGLTRDRKYGRAEVEGREFICIDTGGIDGTEDGVETRMAEQSLLAIEEADVVLFMVDARAGLMPADEAIAKHLRSREKPTFLVANKTDGLDPDQAVVDFYSLGLGEIYPIAASHGRGVLSLLEHVLLPWMDDVAPQEEVDEDAEYWAQFEAEQNGEEAPEDDFDPQSLPIKLAIVGRPNVGKSTLTNRILGEERVVVYDMPGTTRDSIYIPMERDEREYVLIDTAGVRKRGKITDAVEKFSVIKTLQAIEDANVVLLVIDAREGISDQDLSLLGFILNSGRSLVIVVNKWDGLSQEVKEQVKETLDFRLGFIDFARVHFISALHGSGVGNLFESVREAYDSSTRRVSTAMLTRIMTMAVEDHQPPLVRGRRVKLKYAHTGGYNPPIVVIHGNQVKDLPDSYKRYLMNYFRKSLEVMGTPIRIQFKEGENPYANKRNTLTPTQMRKRKRLMKHIKKSK.

EngA-type G domains lie at 3-166 (PVVA…MDDV) and 203-376 (IKLA…DSST). Residues 9 to 16 (GRPNVGKS), 56 to 60 (DTGGI), 118 to 121 (NKTD), 209 to 216 (GRPNVGKS), 256 to 260 (DTAGV), and 321 to 324 (NKWD) contribute to the GTP site. The KH-like domain occupies 377–461 (RRVSTAMLTR…PIRIQFKEGE (85 aa)).

This sequence belongs to the TRAFAC class TrmE-Era-EngA-EngB-Septin-like GTPase superfamily. EngA (Der) GTPase family. In terms of assembly, associates with the 50S ribosomal subunit.

GTPase that plays an essential role in the late steps of ribosome biogenesis. The sequence is that of GTPase Der from Salmonella typhi.